Reading from the N-terminus, the 569-residue chain is uncharacterized protein (569 aa).

The N-terminal stretch at 1-22 is a signal peptide; sequence MSLLVKAALILKCASMLQGVSA. The disordered stretch occupies residues 498–541; it reads RETSILDSTNTTSTNATNTTTTTSSSSTASSSASASSSTSATSG. Positions 505-540 are enriched in low complexity; it reads STNTTSTNATNTTTTTSSSSTASSSASASSSTSATS.

It localises to the secreted. The protein localises to the cell surface. This is an uncharacterized protein from Schizosaccharomyces pombe (strain 972 / ATCC 24843) (Fission yeast).